The following is a 721-amino-acid chain: Ribonucleoside-diphosphate reductase subunit alpha (721 aa).

Residues Thr159, 175-176 (SC), Gly204, 384-388 (NLCSE), and 589-593 (PTGSI) each bind substrate. A disulfide bond links Cys176 and Cys413. The active-site Proton acceptor is the Asn384. Residue Cys386 is the Cysteine radical intermediate of the active site. Glu388 functions as the Proton acceptor in the catalytic mechanism.

It belongs to the ribonucleoside diphosphate reductase large chain family. As to quaternary structure, tetramer of two alpha and two beta subunits.

The catalysed reaction is a 2'-deoxyribonucleoside 5'-diphosphate + [thioredoxin]-disulfide + H2O = a ribonucleoside 5'-diphosphate + [thioredoxin]-dithiol. With respect to regulation, under complex allosteric control mediated by deoxynucleoside triphosphates and ATP binding. The type of nucleotide bound at the specificity site determines substrate preference. It seems probable that ATP makes the enzyme reduce CDP and UDP, dGTP favors ADP reduction and dTTP favors GDP reduction. Provides the precursors necessary for DNA synthesis. Catalyzes the biosynthesis of deoxyribonucleotides from the corresponding ribonucleotides. This is Ribonucleoside-diphosphate reductase subunit alpha (nrdE) from Mycoplasma pneumoniae (strain ATCC 29342 / M129 / Subtype 1) (Mycoplasmoides pneumoniae).